A 468-amino-acid chain; its full sequence is Cysteine--tRNA ligase (468 aa).

Cys33 contacts Zn(2+). The short motif at 35–45 (ATVQGLPHIGH) is the 'HIGH' region element. Residues Cys211, His236, and Glu240 each contribute to the Zn(2+) site. Residues 267-271 (KMSKS) carry the 'KMSKS' region motif. Residue Lys270 participates in ATP binding.

Belongs to the class-I aminoacyl-tRNA synthetase family. As to quaternary structure, monomer. Zn(2+) is required as a cofactor.

It is found in the cytoplasm. It catalyses the reaction tRNA(Cys) + L-cysteine + ATP = L-cysteinyl-tRNA(Cys) + AMP + diphosphate. This Mycobacterium marinum (strain ATCC BAA-535 / M) protein is Cysteine--tRNA ligase.